The primary structure comprises 53 residues: Rubredoxin-1 (53 aa).

One can recognise a Rubredoxin-like domain in the interval 1 to 53; it reads MEKFVCDVCGYIYDPVVGDPDNGVAPGTKFKDIPDTWVCPLCKLDKTHFSKVE. Cys6, Cys9, Cys39, and Cys42 together coordinate Fe cation.

Belongs to the rubredoxin family. Fe(3+) is required as a cofactor.

Rubredoxin is a small nonheme, iron protein lacking acid-labile sulfide. Its single Fe, chelated to 4 Cys, functions as an electron acceptor and may also stabilize the conformation of the molecule. The sequence is that of Rubredoxin-1 (rubR1) from Clostridium perfringens (strain 13 / Type A).